A 1641-amino-acid polypeptide reads, in one-letter code: Lysine-specific demethylase 6B (1641 aa).

4 disordered regions span residues leucine 42–lysine 89, tyrosine 188–aspartate 682, leucine 704–serine 808, and glycine 824–alanine 1085. Over residues leucine 214–leucine 223 the composition is skewed to low complexity. Residue serine 224 is modified to Phosphoserine. Pro residues predominate over residues proline 242 to proline 268. Basic and acidic residues predominate over residues glycine 293 to histidine 309. Low complexity predominate over residues proline 312 to proline 326. Basic and acidic residues predominate over residues aspartate 361–methionine 372. Positions proline 396–glycine 415 are enriched in low complexity. Residues proline 467 to alanine 488 show a composition bias toward pro residues. Residues threonine 552 to threonine 568 are compositionally biased toward low complexity. 2 stretches are compositionally biased toward pro residues: residues glutamine 597 to proline 613 and glycine 645 to proline 660. Residues leucine 704–glutamate 713 are compositionally biased toward basic and acidic residues. Over residues threonine 743–threonine 766 the composition is skewed to low complexity. Pro residues predominate over residues proline 774 to serine 801. Residues valine 855–proline 879 are compositionally biased toward low complexity. Residues alanine 891–proline 908 are compositionally biased toward pro residues. Basic and acidic residues predominate over residues glutamate 918 to glycine 931. Basic residues predominate over residues glycine 974–alanine 987. Residues cysteine 988–alanine 1001 are compositionally biased toward basic and acidic residues. Positions lysine 1002–arginine 1014 are enriched in basic residues. A compositionally biased stretch (pro residues) spans alanine 1047–proline 1066. Lysine 1107 is covalently cross-linked (Glycyl lysine isopeptide (Lys-Gly) (interchain with G-Cter in SUMO2)). The segment at phenylalanine 1286–isoleucine 1323 is disordered. Acidic residues predominate over residues arginine 1294–aspartate 1305. A compositionally biased stretch (low complexity) spans serine 1306–aspartate 1317. The 164-residue stretch at arginine 1337–tryptophan 1500 folds into the JmjC domain. Fe cation-binding residues include histidine 1388, glutamate 1390, and histidine 1468. Residues cysteine 1573, cysteine 1576, cysteine 1600, and cysteine 1603 each coordinate Zn(2+).

It belongs to the UTX family. As to quaternary structure, interacts with TLE1. Component of the MLL4 complex, at least composed of KMT2B/MLL4, ASH2L, RBBP5, WDR5, and KDM6B. Interacts with TBX21, SMARCA4, SMARCC1 and SMARCC2. It depends on L-ascorbate as a cofactor. Requires Fe(2+) as cofactor.

The protein resides in the nucleus. It carries out the reaction N(6),N(6),N(6)-trimethyl-L-lysyl(27)-[histone H3] + 2 2-oxoglutarate + 2 O2 = N(6)-methyl-L-lysyl(27)-[histone H3] + 2 formaldehyde + 2 succinate + 2 CO2. In terms of biological role, histone demethylase that specifically demethylates 'Lys-27' of histone H3, thereby playing a central role in histone code. Demethylates trimethylated and dimethylated H3 'Lys-27'. Plays a central role in regulation of posterior development, by regulating HOX gene expression. Involved in inflammatory response by participating in macrophage differentiation in case of inflammation by regulating gene expression and macrophage differentiation. Plays a demethylase-independent role in chromatin remodeling to regulate T-box family member-dependent gene expression by acting as a link between T-box factors and the SMARCA4-containing SWI/SNF remodeling complex. This Mus musculus (Mouse) protein is Lysine-specific demethylase 6B (Kdm6b).